A 309-amino-acid chain; its full sequence is Metal ABC transporter substrate-binding lipoprotein SsaB (309 aa).

Positions M1 to A19 are cleaved as a signal peptide. Residue C20 is the site of N-palmitoyl cysteine attachment. C20 is lipidated: S-diacylglycerol cysteine. Positions 67, 139, 205, and 280 each coordinate a divalent metal cation.

It belongs to the bacterial solute-binding protein 9 family. Lipoprotein receptor antigen (Lrai) subfamily. In terms of assembly, homodimer and homotrimer.

The protein localises to the cell membrane. In terms of biological role, part of an ATP-binding cassette (ABC) transport system involved in metal import. Binds a metal with high affinity and specificity and delivers it to the membrane permease for translocation into the cytoplasm. Also acts as an adhesin which is involved on adherence to extracellular matrix. It is an important factor in the pathogenesis and infection. May contribute to the formation and accumulation of dental plaque. This is Metal ABC transporter substrate-binding lipoprotein SsaB (ssaB) from Streptococcus sanguinis.